The primary structure comprises 374 residues: Protein Brevis radix-like 2 (374 aa).

Disordered stretches follow at residues 12–43 and 57–80; these read NTNN…IKSL and AYKS…ADSD. The segment covering 65-80 has biased composition (polar residues); it reads SGSSNQNKNRSYADSD. The 56-residue stretch at 143–198 folds into the BRX 1 domain; sequence KEWVAQVEPGVLITFVSLPEGGNDMKRIRFSREMFDKWQAQKWWAENFDKVMELYN. The segment at 205–316 is disordered; that stretch reads QSVPLPTPPR…EELSVSNASD (112 aa). Polar residues-rich tracts occupy residues 246–259 and 267–288; these read SSGS…TQTQ and GLAT…SSVD. Residues 289–307 are compositionally biased toward basic and acidic residues; it reads ESARSSFSREEEEADHSGE. The BRX 2 domain maps to 319 to 374; the sequence is TEWVEQDEAGVYITIRALPDGTRELRRVRFSREKFGETNARLWWEQNRARIQQQYL.

The protein belongs to the BRX family. Expressed in roots.

It is found in the nucleus. The sequence is that of Protein Brevis radix-like 2 (BRXL2) from Arabidopsis thaliana (Mouse-ear cress).